The primary structure comprises 596 residues: MTKSYNIIHHKFDVIVVGAGGAGLRAAFGMAEEGLNTACISKLFPTRSHTVAAQGGISAALGNMGADDWRWHMYDTVKGSDWLGDQDAIEYMCKNAPDAILELEHYGVPFSRTEEGKIYQRPFGGMTTEYGKGKAAQRTCAAADRTGHAILHTLYQQSLKHKVQFFIEYFAIDLLMENGECRGVVAWNLDDGSLHCFRAHNVVLATGGYGRAYFSATSAHTCTGDGGGMAIRAGLPLQDMEFVQFHPTGIYSAGCLITEGARGEGGYLVNANGERFMERYAPAAKDLASRDVVSRAMTIEIREGRGVGEHKDHVFLHLNHLSPEIVHSRLPGISETAKIFAGVDVTKEPIPVLPTVHYNMGGIPTNYHGQVIIKDGKNHNSVVKGLMSIGEAACVSVHGANRLGSNSLLDLVVFGRSAALKAAELIKPASPHKPVSEEALEKIISRFDKIRHSSGNISVADLRLKMQRTMQSHASVFRTQEVLDEGAEMISEIRSGYKDIKVNDKSLIWNSDLVEALELDNLLDQALVTVYSAAARKESRGAHAREDYPDRNDKEWMQHTLSGVDEAGKVVLDYKPVTLTTLSDEVKAIPPAKRVY.

FAD contacts are provided by residues 18–23 (GAGGAG), 41–56 (SKLF…AQGG), and D225. Tele-8alpha-FAD histidine is present on H49. Substrate-binding residues include H246 and T258. The Proton acceptor role is filled by R290. H357 provides a ligand contact to substrate. Residue E391 participates in FAD binding. R402 contacts substrate. 407-408 (SL) contributes to the FAD binding site.

This sequence belongs to the FAD-dependent oxidoreductase 2 family. FRD/SDH subfamily. As to quaternary structure, part of an enzyme complex containing four subunits: a flavoprotein, an iron-sulfur, cytochrome b-556, and a hydrophobic anchor protein. It depends on FAD as a cofactor.

The protein localises to the cell inner membrane. It catalyses the reaction a quinone + succinate = fumarate + a quinol. It participates in carbohydrate metabolism; tricarboxylic acid cycle; fumarate from succinate (bacterial route): step 1/1. The chain is Succinate dehydrogenase flavoprotein subunit (sdhA) from Rickettsia bellii (strain RML369-C).